The following is a 249-amino-acid chain: Ubiquinone biosynthesis O-methyltransferase (249 aa).

Arg41, Gly72, Asp93, and Met136 together coordinate S-adenosyl-L-methionine.

This sequence belongs to the methyltransferase superfamily. UbiG/COQ3 family.

It carries out the reaction a 3-demethylubiquinol + S-adenosyl-L-methionine = a ubiquinol + S-adenosyl-L-homocysteine + H(+). It catalyses the reaction a 3-(all-trans-polyprenyl)benzene-1,2-diol + S-adenosyl-L-methionine = a 2-methoxy-6-(all-trans-polyprenyl)phenol + S-adenosyl-L-homocysteine + H(+). Its pathway is cofactor biosynthesis; ubiquinone biosynthesis. O-methyltransferase that catalyzes the 2 O-methylation steps in the ubiquinone biosynthetic pathway. This is Ubiquinone biosynthesis O-methyltransferase from Methylobacterium nodulans (strain LMG 21967 / CNCM I-2342 / ORS 2060).